The primary structure comprises 318 residues: L-lactate dehydrogenase (318 aa).

NAD(+) is bound by residues Val-16, Asp-37, and Tyr-69. Substrate-binding positions include Gln-86, Arg-92, and 124-127 (NPVD). Residues 122–124 (ASN) and Ser-147 each bind NAD(+). Position 152–155 (152–155 (DSAR)) interacts with substrate. His-179 acts as the Proton acceptor in catalysis. Position 223 is a phosphotyrosine (Tyr-223). Substrate is bound at residue Thr-232.

The protein belongs to the LDH/MDH superfamily. LDH family. As to quaternary structure, homotetramer.

The protein localises to the cytoplasm. The enzyme catalyses (S)-lactate + NAD(+) = pyruvate + NADH + H(+). It participates in fermentation; pyruvate fermentation to lactate; (S)-lactate from pyruvate: step 1/1. Its function is as follows. Catalyzes the conversion of lactate to pyruvate. The chain is L-lactate dehydrogenase from Mycoplasma mycoides subsp. mycoides SC (strain CCUG 32753 / NCTC 10114 / PG1).